We begin with the raw amino-acid sequence, 697 residues long: MPKPASMAMNTTKSTTPAHVISPANIEWQTDDAGNEVPVSGEFGDAYFSQADGLAESHHVFLAHNQLPTRLANLIPKQCFTIYELGFGTGLNLLATWQLWRQLRLTHPHLASARLHFITTEKHPVPFSDLAKILAPLGQRTPELALLIEQLLTSYPPLIAGCHRLDFIDDNLTLDIWLGDANDSLASLDSTVATQRPYINAWFLDGFAPSCNEILWTERIFSHMQRLSRAGTTAATYSCAGIIKRGLQSQGFVIKKSKVLGSKREMLTAVMSEMSSLDKPISTLSNKVTLSNYPNNAVVIGAGVAGLLTAWSLANRGISVTVLDKDAPLAGASGNPRALLAPNMTPIHHVYEHLHSIGYLYSGRLYRYFNQQAAIQKSPLILEQTGTLDLLVKTNIGTEQILDYPDTMATTISPEKAQDISGLKDKDLAHNLYMPQAGLVNPQALQTVILAHPNITYQQLNIINIKETENSIILTGSKEDENASQASLTITADHVVICAAYESHQLDKRIVKCRTIRGQLSWFTPTAQQLTQLPKLPLKYSGYCAPFIGQSGDAELNHISENQPQFLLGASFIDGDTNIDVRDEENQQNYDKLIEDMPELSSVLPNDISTWHARAGIRTQTMDYHPLVGLLAQSQRLWSMSAMGAKGYAIAPICAEALADMMLGCFTPLSAAMLARLSPNRARLHKVHKHKTRQAVI.

The segment at 1–272 is tRNA (mnm(5)s(2)U34)-methyltransferase; the sequence is MPKPASMAMN…KREMLTAVMS (272 aa). The interval 300–697 is FAD-dependent cmnm(5)s(2)U34 oxidoreductase; it reads IGAGVAGLLT…HKHKTRQAVI (398 aa).

This sequence in the N-terminal section; belongs to the methyltransferase superfamily. tRNA (mnm(5)s(2)U34)-methyltransferase family. The protein in the C-terminal section; belongs to the DAO family. It depends on FAD as a cofactor.

Its subcellular location is the cytoplasm. It catalyses the reaction 5-aminomethyl-2-thiouridine(34) in tRNA + S-adenosyl-L-methionine = 5-methylaminomethyl-2-thiouridine(34) in tRNA + S-adenosyl-L-homocysteine + H(+). Its function is as follows. Catalyzes the last two steps in the biosynthesis of 5-methylaminomethyl-2-thiouridine (mnm(5)s(2)U) at the wobble position (U34) in tRNA. Catalyzes the FAD-dependent demodification of cmnm(5)s(2)U34 to nm(5)s(2)U34, followed by the transfer of a methyl group from S-adenosyl-L-methionine to nm(5)s(2)U34, to form mnm(5)s(2)U34. The sequence is that of tRNA 5-methylaminomethyl-2-thiouridine biosynthesis bifunctional protein MnmC from Psychrobacter cryohalolentis (strain ATCC BAA-1226 / DSM 17306 / VKM B-2378 / K5).